We begin with the raw amino-acid sequence, 304 residues long: MNDLLKGSFELPRGQSSREGDVELGEQQGGDQGLEDFFKKVQVIDKQYDKLDKLLKKLQASHEESKSVTKAPAMKAIKKTMEKDVDEVGSIARFIKGKLEELDRENLANRQKPGCAKGSGVDRSRTATTLSLKKKLKDKMAEFQVLRENIQQEYRDVVDRRVYTVTGERADEDTIDELIETGNSEQIFQKAIQEQGRGQVMDTLAEIQERHDAVRDLEKKLLDLQQIFLDMAVLVDAQGEMLDNIESQVSSAVDHVQSGNTALQRAKSLQKNSRKWMCIAIIILLIVVAVIVVGVLKPWKNKSA.

Methionine 1 carries the N-acetylmethionine modification. Positions 1–30 (MNDLLKGSFELPRGQSSREGDVELGEQQGG) are disordered. The Cytoplasmic portion of the chain corresponds to 1–275 (MNDLLKGSFE…AKSLQKNSRK (275 aa)). Coiled coils occupy residues 34 to 67 (LEDF…ESKS) and 129 to 162 (TLSL…DRRV). One can recognise a t-SNARE coiled-coil homology domain in the interval 204–266 (LAEIQERHDA…QSGNTALQRA (63 aa)). The helical; Anchor for type IV membrane protein transmembrane segment at 276–296 (WMCIAIIILLIVVAVIVVGVL) threads the bilayer. The Vesicular segment spans residues 297–304 (KPWKNKSA).

Belongs to the syntaxin family. Part of the t-SNARE complex. As to expression, widely expressed in all tissues throughout plant development.

It is found in the cell membrane. In terms of biological role, vesicle trafficking protein that functions in the secretory pathway. Acts in coordination with SYP123 to mediate tip-focused membrane trafficking for root hair tip growth. Functions in root hair elongation by forming SNARE complexes with VAMP721,VAMP722 or VAMP724. Involved in cytokinesis. Acts as a cell plate-specific syntaxin, required for the fusion of vesicles at the plane of cell division. Required for secretory trafficking to the plasma membrane during interphase. Involved in the regulation of density of the H(+) ATPase proteins at the plasma membrane of root and shoot in epidermal cells. Modulation of SYP132 expression by auxin affects clathrin-sensitive H(+) ATPase traffic from the plasma membrane, and influences apoplastic acidification and plant growth. In Arabidopsis thaliana (Mouse-ear cress), this protein is Syntaxin-132.